Reading from the N-terminus, the 122-residue chain is Basic phospholipase A2 10 (122 aa).

7 disulfide bridges follow: Cys-26-Cys-114, Cys-28-Cys-43, Cys-42-Cys-94, Cys-48-Cys-122, Cys-49-Cys-87, Cys-56-Cys-80, and Cys-74-Cys-85. Ca(2+) is bound by residues Tyr-27, Gly-29, and Gly-31. Residue His-46 is part of the active site. Asp-47 is a binding site for Ca(2+). The active site involves Asp-88.

Ca(2+) is required as a cofactor. As to expression, expressed by the venom gland.

It is found in the secreted. The enzyme catalyses a 1,2-diacyl-sn-glycero-3-phosphocholine + H2O = a 1-acyl-sn-glycero-3-phosphocholine + a fatty acid + H(+). Inhibited by chemical modifications mediated by p-BPB, anhydrous acetic acid and NBSF. Its function is as follows. Snake venom phospholipase A2 (PLA2) that has a strong dose-dependent anticoagulant effect. In vivo, intramuscular and intervenal injection causes muscle necrosis. Induces moderate edema in the mouse foot pad. PLA2 catalyzes the calcium-dependent hydrolysis of the 2-acyl groups in 3-sn-phosphoglycerides. The protein is Basic phospholipase A2 10 of Crotalus durissus cumanensis (South American rattlesnake).